We begin with the raw amino-acid sequence, 294 residues long: MSETMTNQNVVNEEQPFNESKHRSHGIDISAIERSMEDLSIDNETIALEVNKLKLFYGEKEALHGIDLSIPQKRVTAFIGPSGCGKSTLLRCFNRMNDLVDGCRIDGQILLEQEDIYRKGVDVAELRRRVGMVFQKPNPFPKTIYENVAYGLRIQGINKKRILDETVEWALKSAALWDEVKDRLNDSALGLSGGQQQRLVIARTVAVKPEVLLLDEPASALDPLSTLKIEELIHELKNDYTIVIVTHNMQQAARVSDYTAFMYMGDLIEFGSTNQLFTNPSCKQTEDYITGRYG.

Polar residues predominate over residues 1–18; sequence MSETMTNQNVVNEEQPFN. The tract at residues 1–24 is disordered; the sequence is MSETMTNQNVVNEEQPFNESKHRS. Residues 48-289 form the ABC transporter domain; the sequence is LEVNKLKLFY…PSCKQTEDYI (242 aa). Position 80 to 87 (80 to 87) interacts with ATP; the sequence is GPSGCGKS.

It belongs to the ABC transporter superfamily. Phosphate importer (TC 3.A.1.7) family. As to quaternary structure, the complex is composed of two ATP-binding proteins (PstB), two transmembrane proteins (PstC and PstA) and a solute-binding protein (PstS).

Its subcellular location is the cell inner membrane. The catalysed reaction is phosphate(out) + ATP + H2O = ADP + 2 phosphate(in) + H(+). In terms of biological role, part of the ABC transporter complex PstSACB involved in phosphate import. Responsible for energy coupling to the transport system. The chain is Phosphate import ATP-binding protein PstB from Hahella chejuensis (strain KCTC 2396).